Consider the following 225-residue polypeptide: uncharacterized protein (225 aa).

The span at 1–19 shows a compositional bias: polar residues; sequence MKFNSISPNKQHHTGFTTS. The tract at residues 1 to 21 is disordered; the sequence is MKFNSISPNKQHHTGFTTSNN.

This is an uncharacterized protein from Dictyostelium discoideum (Social amoeba).